The following is a 189-amino-acid chain: Resolvase (189 aa).

The Resolvase/invertase-type recombinase catalytic domain occupies 1–139; that stretch reads MLVGYARVST…EGLKSAKARG (139 aa). S9 functions as the O-(5'-phospho-DNA)-serine intermediate in the catalytic mechanism. The tract at residues 130-151 is disordered; that stretch reads EGLKSAKARGRNGGRPSKRNDK. The segment at residues 165-184 is a DNA-binding region (H-T-H motif); it reads IVDIVKQTGLSRATVYRVLN.

This sequence belongs to the site-specific recombinase resolvase family.

Its function is as follows. A likely role for the res protein would be to stabilize pIP404 by reducing the number of plasmid multimers resulting from homologous recombination. The polypeptide is Resolvase (res) (Clostridium perfringens).